Reading from the N-terminus, the 432-residue chain is MPAIVLIGAQWGDEGKGKATDLLGGRVQWVVRYQGGNNAGHTVVLPSGENFALHLIPSGVLTPGVTNVIGNGVVIDPGVLLSELKGLEDRGVDTSKLLISADAHLLMPYHVAIDKVTERYMGSKKIGTTGRGIGPCYQDKVARMGIRVADVLDTDQLAHKVEAALEFKNQVLVKIYNRKALDPDQVVESLLEQAEGFRHRIADARLLLNNALEAGETVLLEGSQGTLLDVDHGTYPYVTSSNPTAGGAAVGSGIGPTRIRTVLGILKAYTTRVGSGPFPTELFDESGEYLSKTGGEFGVTTGRRRRCGWFDAVIARYATRVNGITDYFLTKLDVLSSLETVPVCVGYEIDGKRTSEMPMTQSDLCRAKPVYEELPGWWEDISAAREFDDLPAKARDYVLRLEEIAGAPVSCIGVGPGRDQTIVRRDILQERA.

Residues Gly-12 to Lys-18 and Gly-40 to Thr-42 contribute to the GTP site. Asp-13 serves as the catalytic Proton acceptor. Residues Asp-13 and Gly-40 each contribute to the Mg(2+) site. IMP is bound by residues Asp-13–Lys-16, Asn-38–His-41, Thr-129, Arg-143, Gln-224, Thr-239, and Arg-303. His-41 (proton donor) is an active-site residue. Val-299–Arg-305 contacts substrate. GTP-binding positions include Arg-305, Lys-331–Asp-333, and Gly-413–Gly-415.

This sequence belongs to the adenylosuccinate synthetase family. Homodimer. Mg(2+) is required as a cofactor.

It localises to the cytoplasm. The enzyme catalyses IMP + L-aspartate + GTP = N(6)-(1,2-dicarboxyethyl)-AMP + GDP + phosphate + 2 H(+). The protein operates within purine metabolism; AMP biosynthesis via de novo pathway; AMP from IMP: step 1/2. In terms of biological role, plays an important role in the de novo pathway of purine nucleotide biosynthesis. Catalyzes the first committed step in the biosynthesis of AMP from IMP. This is Adenylosuccinate synthetase from Mycobacterium marinum (strain ATCC BAA-535 / M).